The sequence spans 362 residues: Phosphoserine aminotransferase (362 aa).

Arg42 is a binding site for L-glutamate. Pyridoxal 5'-phosphate contacts are provided by residues Ala76–Ser77, Trp102, Thr152, Asp173, and Gln196. Position 197 is an N6-(pyridoxal phosphate)lysine (Lys197). Asn238–Thr239 lines the pyridoxal 5'-phosphate pocket.

This sequence belongs to the class-V pyridoxal-phosphate-dependent aminotransferase family. SerC subfamily. As to quaternary structure, homodimer. The cofactor is pyridoxal 5'-phosphate.

The protein resides in the cytoplasm. The catalysed reaction is O-phospho-L-serine + 2-oxoglutarate = 3-phosphooxypyruvate + L-glutamate. The enzyme catalyses 4-(phosphooxy)-L-threonine + 2-oxoglutarate = (R)-3-hydroxy-2-oxo-4-phosphooxybutanoate + L-glutamate. Its pathway is amino-acid biosynthesis; L-serine biosynthesis; L-serine from 3-phospho-D-glycerate: step 2/3. The protein operates within cofactor biosynthesis; pyridoxine 5'-phosphate biosynthesis; pyridoxine 5'-phosphate from D-erythrose 4-phosphate: step 3/5. In terms of biological role, catalyzes the reversible conversion of 3-phosphohydroxypyruvate to phosphoserine and of 3-hydroxy-2-oxo-4-phosphonooxybutanoate to phosphohydroxythreonine. The protein is Phosphoserine aminotransferase of Chromobacterium violaceum (strain ATCC 12472 / DSM 30191 / JCM 1249 / CCUG 213 / NBRC 12614 / NCIMB 9131 / NCTC 9757 / MK).